The primary structure comprises 67 residues: Beta-defensin 14 (67 aa).

A signal peptide spans 1–22 (MRLHYLLFVFLILFLVPAPGDA). Intrachain disulfides connect Cys-33–Cys-62, Cys-40–Cys-55, and Cys-45–Cys-63.

It belongs to the beta-defensin family.

Its subcellular location is the secreted. Its function is as follows. Has antibacterial activity. In Mus musculus (Mouse), this protein is Beta-defensin 14 (Defb14).